We begin with the raw amino-acid sequence, 409 residues long: uncharacterized protein (409 aa).

This is an uncharacterized protein from Mycoplasma genitalium (strain ATCC 33530 / DSM 19775 / NCTC 10195 / G37) (Mycoplasmoides genitalium).